The primary structure comprises 1254 residues: Vitamin B12-dependent ribonucleotide reductase (1254 aa).

Residues Ser-153, 198-199, Gly-230, 474-478, and 675-679 each bind substrate; these read AC, NPCSE, and PTGTI. Residues Cys-199 and Cys-487 are joined by a disulfide bond. Asn-474 serves as the catalytic Proton acceptor. Cys-476 (cysteine radical intermediate) is an active-site residue. Glu-478 functions as the Proton acceptor in the catalytic mechanism.

It belongs to the ribonucleoside diphosphate reductase class-2 family. Adenosylcob(III)alamin is required as a cofactor.

The catalysed reaction is a 2'-deoxyribonucleoside 5'-diphosphate + [thioredoxin]-disulfide + H2O = a ribonucleoside 5'-diphosphate + [thioredoxin]-dithiol. Its function is as follows. Catalyzes the reduction of ribonucleotides to deoxyribonucleotides. May function to provide a pool of deoxyribonucleotide precursors for DNA repair during oxygen limitation and/or for immediate growth after restoration of oxygen. This chain is Vitamin B12-dependent ribonucleotide reductase (nrdJ), found in Bradyrhizobium diazoefficiens (strain JCM 10833 / BCRC 13528 / IAM 13628 / NBRC 14792 / USDA 110).